The following is a 341-amino-acid chain: Long-chain acyl-[acyl-carrier-protein] reductase (341 aa).

The protein belongs to the short-chain dehydrogenases/reductases (SDR) family. A divalent metal cation serves as cofactor.

It carries out the reaction a long-chain fatty aldehyde + holo-[ACP] + NADP(+) = a long-chain fatty acyl-[ACP] + NADPH + H(+). It catalyses the reaction a long-chain fatty aldehyde + holo-[ACP] + NAD(+) = a long-chain fatty acyl-[ACP] + NADH + H(+). In terms of biological role, catalyzes the NADP-dependent reduction of long-chain acyl-ACP to the corresponding fatty aldehyde. Involved in the biosynthesis of alkanes, mainly heptadecane and pentadecane, by producing the fatty aldehydes used by aldehyde decarbonylase. This Synechococcus elongatus (strain ATCC 33912 / PCC 7942 / FACHB-805) (Anacystis nidulans R2) protein is Long-chain acyl-[acyl-carrier-protein] reductase.